Reading from the N-terminus, the 892-residue chain is Translation initiation factor IF-2 (892 aa).

Residues 88–305 (KKRTFVKRDP…SLQQGFQKPA (218 aa)) form a disordered region. Composition is skewed to basic and acidic residues over residues 93 to 159 (VKRD…KDKV) and 166 to 216 (DMTK…EENK). Basic residues predominate over residues 254–269 (GRGRNAKAARPAKKGK). A compositionally biased stretch (basic and acidic residues) spans 270–282 (HAESKADREEARA). The tr-type G domain maps to 391 to 560 (PRAPVVTIMG…LLQAEVLELK (170 aa)). Residues 400–407 (GHVDHGKT) form a G1 region. 400-407 (GHVDHGKT) is a GTP binding site. The tract at residues 425-429 (GITQH) is G2. Positions 446–449 (DTPG) are G3. Residues 446 to 450 (DTPGH) and 500 to 503 (NKID) contribute to the GTP site. The interval 500-503 (NKID) is G4. The segment at 536–538 (SAK) is G5.

The protein belongs to the TRAFAC class translation factor GTPase superfamily. Classic translation factor GTPase family. IF-2 subfamily.

The protein resides in the cytoplasm. Functionally, one of the essential components for the initiation of protein synthesis. Protects formylmethionyl-tRNA from spontaneous hydrolysis and promotes its binding to the 30S ribosomal subunits. Also involved in the hydrolysis of GTP during the formation of the 70S ribosomal complex. The polypeptide is Translation initiation factor IF-2 (Salmonella paratyphi A (strain ATCC 9150 / SARB42)).